The primary structure comprises 556 residues: Endonuclease/exonuclease/phosphatase family domain-containing protein 1 (556 aa).

The region spanning 39 to 68 (ERLNINTATEEELMTLPGVTRQVAQNIVEY) is the HhH domain.

The polypeptide is Endonuclease/exonuclease/phosphatase family domain-containing protein 1 (eepd1) (Xenopus laevis (African clawed frog)).